A 123-amino-acid chain; its full sequence is D-ribose pyranase (123 aa).

H20 (proton donor) is an active-site residue. Substrate is bound by residues D28, H90, and Y112–N114.

The protein belongs to the RbsD / FucU family. RbsD subfamily. In terms of assembly, homodecamer.

It is found in the cytoplasm. The catalysed reaction is beta-D-ribopyranose = beta-D-ribofuranose. It functions in the pathway carbohydrate metabolism; D-ribose degradation; D-ribose 5-phosphate from beta-D-ribopyranose: step 1/2. In terms of biological role, catalyzes the interconversion of beta-pyran and beta-furan forms of D-ribose. This Corynebacterium glutamicum (strain R) protein is D-ribose pyranase.